The sequence spans 100 residues: Urease subunit gamma (100 aa).

It belongs to the urease gamma subunit family. Heterotrimer of UreA (gamma), UreB (beta) and UreC (alpha) subunits. Three heterotrimers associate to form the active enzyme.

It localises to the cytoplasm. It carries out the reaction urea + 2 H2O + H(+) = hydrogencarbonate + 2 NH4(+). It participates in nitrogen metabolism; urea degradation; CO(2) and NH(3) from urea (urease route): step 1/1. The chain is Urease subunit gamma from Stutzerimonas stutzeri (strain A1501) (Pseudomonas stutzeri).